A 332-amino-acid chain; its full sequence is Large ribosomal subunit protein mL44 (332 aa).

The transit peptide at 1–30 (MASGLTRLLLRGPRCLLATAGLTLIPPVRG) directs the protein to the mitochondrion. An RNase III domain is found at 86 to 228 (DLLKTAFVNS…LITQMTGKEL (143 aa)). The DRBM domain maps to 236–306 (NPMGLLVQEL…ARVALRKLYG (71 aa)).

Belongs to the ribonuclease III family. Mitochondrion-specific ribosomal protein mL44 subfamily. In terms of assembly, component of the mitochondrial ribosome large subunit (39S) which comprises a 16S rRNA and about 50 distinct proteins.

The protein resides in the mitochondrion. Its function is as follows. Component of the 39S subunit of mitochondrial ribosome. May have a function in the assembly/stability of nascent mitochondrial polypeptides exiting the ribosome. In Bos taurus (Bovine), this protein is Large ribosomal subunit protein mL44 (MRPL44).